A 196-amino-acid chain; its full sequence is MWFMYVLSWLSLFIQVAFITLAVAAGLYYLAELIEEYTVATSRIIKYMIWFSTAVLIGLYVFERFPTSMIGVGLFTNLVYFGLLQTFPFIMLTSPNFILSCGLVVVNHYLAFQFFAEEYYPFSEVLAYFTFCLWIIPFAFFVSLSAGENVLPSTMQPGDDVVSNYFTKGKRGKRLGILVVFSFIKEAILPSRQKIY.

5 consecutive transmembrane segments (helical) span residues 3 to 23 (FMYVLSWLSLFIQVAFITLAV), 42 to 62 (SRIIKYMIWFSTAVLIGLYVF), 70 to 90 (IGVGLFTNLVYFGLLQTFPFI), 97 to 117 (FILSCGLVVVNHYLAFQFFAE), and 125 to 145 (VLAYFTFCLWIIPFAFFVSLS).

Belongs to the SVP26 family. Detected in testis.

It localises to the membrane. This chain is Protein TEX261 (Tex261), found in Mus musculus (Mouse).